A 208-amino-acid chain; its full sequence is Potassium-transporting ATPase KdpC subunit (208 aa).

A helical membrane pass occupies residues 6 to 26 (PALLVSIVLLVVCGLVYPLVL).

This sequence belongs to the KdpC family. In terms of assembly, the system is composed of three essential subunits: KdpA, KdpB and KdpC.

Its subcellular location is the cell membrane. Its function is as follows. Part of the high-affinity ATP-driven potassium transport (or Kdp) system, which catalyzes the hydrolysis of ATP coupled with the electrogenic transport of potassium into the cytoplasm. This subunit acts as a catalytic chaperone that increases the ATP-binding affinity of the ATP-hydrolyzing subunit KdpB by the formation of a transient KdpB/KdpC/ATP ternary complex. This is Potassium-transporting ATPase KdpC subunit from Clostridioides difficile (strain 630) (Peptoclostridium difficile).